The following is a 695-amino-acid chain: Potassium voltage-gated channel subfamily KQT member 4 (695 aa).

The segment at 1 to 21 (MAEAPPRRLGLGPPPGDAPRA) is disordered. The Cytoplasmic segment spans residues 1 to 96 (MAEAPPRRLG…VYNVLERPRG (96 aa)). R93 provides a ligand contact to a 1,2-diacyl-sn-glycero-3-phospho-(1D-myo-inositol-4,5-bisphosphate). The helical transmembrane segment at 97–118 (WAFVYHVFIFLLVFSCLVLSVL) threads the bilayer. At 119 to 129 (STIQEHQELAN) the chain is on the extracellular side. Residues 130–152 (ECLLILEFVMIVVFGLEYIIRVW) traverse the membrane as a helical segment. Topologically, residues 153–168 (SAGCCCRYRGWQGRFR) are cytoplasmic. Residues 169 to 191 (FARKPFCVIDFIVFVASVAVIAA) traverse the membrane as a helical segment. Residue K172 participates in a 1,2-diacyl-sn-glycero-3-phospho-(1D-myo-inositol-4,5-bisphosphate) binding. At 192–202 (GTQGNIFATSA) the chain is on the extracellular side. Residues 203–223 (LRSMRFLQILRMVRMDRRGGT) traverse the membrane as a helical; Voltage-sensor segment. A 1,2-diacyl-sn-glycero-3-phospho-(1D-myo-inositol-4,5-bisphosphate) contacts are provided by R219, R220, K225, and S235. Residues 224 to 235 (WKLLGSVVYAHS) lie on the Cytoplasmic side of the membrane. The chain crosses the membrane as a helical span at residues 236–258 (KELITAWYIGFLVLIFASFLVYL). Residues 259 to 270 (AEKDANSDFSSY) lie on the Extracellular side of the membrane. Residues 271–292 (ADSLWWGTITLTTIGYGDKTPH) constitute an intramembrane region (pore-forming). Residue T293 is a topological domain, extracellular. Residues 294–322 (WLGRVLAAGFALLGISFFALPAGILGSGF) traverse the membrane as a helical segment. At 323-695 (ALKVQEQHRQ…ISRSVSTNMD (373 aa)) the chain is on the cytoplasmic side. 2 residues coordinate a 1,2-diacyl-sn-glycero-3-phospho-(1D-myo-inositol-4,5-bisphosphate): H330 and K333. An interaction with CALM region spans residues 342–351 (AANLIQAAWR). Positions 441-483 (RMSSSQKRTGPSKQHLAPPPIPTSPSSEQVGEASSPSKVQKSW) are disordered. 2 stretches are compositionally biased toward polar residues: residues 442–452 (MSSSQKRTGPS) and 464–483 (SPSS…QKSW). An interaction with CALM region spans residues 535–549 (RSVRILKFLVAKRKF). Positions 546 to 650 (KRKFKETLRP…SRCLRSGTSA (105 aa)) are C-terminal assembly domain (tetramerization). Positions 588-608 (GRGPGDRKTREKGDKGPSDTE) are disordered. A compositionally biased stretch (basic and acidic residues) spans 591-605 (PGDRKTREKGDKGPS).

Belongs to the potassium channel family. KQT (TC 1.A.1.15) subfamily. Kv7.4/KCNQ4 sub-subfamily. In terms of assembly, homotetramer. Interacts (via C-terminus) with calmodulin; forms a heterooctameric structure (with 4:4 KCNQ1:CALM stoichiometry); the interaction is calcium-independent, constitutive, participates in the proper assembly of a functional channel. The interaction with calcium-free CALM controls channel trafficking whereas interaction with calcium-bound CALM regulates channel gating. May form a functional heteromultimeric channel with KCNQ3. Interacts with HSP90AB1; promotes cell surface expression of KCNQ4. In terms of tissue distribution, expressed in both the inner (IHCs) and the outer hair cells (OHCs) of the cochlea. Reciprocal longitudinal gradients of expression is present in IHCs and OHCs. The strongest expression in IHCs is in the base of the cochlea and in the apex for OHCs. A basal to apical gradient of expression is also present in both type I and type II spiral ganglion cells.

The protein localises to the basal cell membrane. It catalyses the reaction K(+)(in) = K(+)(out). Two molecules of phosphatidylinositol-4,5-bisphosphate (PIP2-I and PIP2-II) are essential to activate KCNQ4 channel by inducing the coupling of the voltage-sensing domain (VSD) and the pore-forming domain (PD). Upon channel activation, PIP2-I and PIP2-II disrupt the VSD-calmodulin/CALM interaction, causing the release of CALM from the VSD which triggers the opening of the gate. Calcium suppresses KCNQ4 channel current through calcium-bound CALM C-terminus. Therefore CALM acts as calcium sensor that controls channel activity. Pore-forming subunit of the voltage-gated potassium (Kv) channel involved in the regulation of sensory cells excitability in the cochlea. KCNQ4/Kv7.4 channel is composed of 4 pore-forming subunits assembled as tetramers. Promotes the outflow of potassium ions in the repolarization phase of action potential which plays a role in regulating membrane potential of excitable cells. The channel conducts a slowly activating and deactivating current. Current often shows some inward rectification at positive potentials. Channel may be selectively permeable in vitro to other cations besides potassium, in decreasing order of affinity K(+) = Rb(+) &gt; Cs(+) &gt; Na(+). Important for normal physiological function of inner ear such as sensory perception of sound. This Rattus norvegicus (Rat) protein is Potassium voltage-gated channel subfamily KQT member 4.